Consider the following 349-residue polypeptide: Protein-arginine kinase (349 aa).

The Phosphagen kinase C-terminal domain occupies 24 to 252 (IVLSSRIRLA…SQIIEQERQA (229 aa)). ATP contacts are provided by residues 27–31 (SSRIR), His-89, Arg-123, 174–178 (RASVM), and 205–210 (RGIYGE). The short motif at 335–340 (RDIKRA) is the RDXXRA motif of the pArg binding pocket involved in allosteric regulation element.

Belongs to the ATP:guanido phosphotransferase family.

It catalyses the reaction L-arginyl-[protein] + ATP = N(omega)-phospho-L-arginyl-[protein] + ADP + H(+). Its activity is regulated as follows. Appears to be allosterically activated by the binding of pArg-containing polypeptides to the pArg-binding pocket localized in the C-terminal domain of McsB. In terms of biological role, catalyzes the specific phosphorylation of arginine residues in proteins. The chain is Protein-arginine kinase from Halothermothrix orenii (strain H 168 / OCM 544 / DSM 9562).